A 107-amino-acid chain; its full sequence is UPF0145 protein ESA_02470 (107 aa).

The protein belongs to the UPF0145 family.

The polypeptide is UPF0145 protein ESA_02470 (Cronobacter sakazakii (strain ATCC BAA-894) (Enterobacter sakazakii)).